The sequence spans 264 residues: 3-deoxy-manno-octulosonate cytidylyltransferase (264 aa).

Belongs to the KdsB family.

It is found in the cytoplasm. It catalyses the reaction 3-deoxy-alpha-D-manno-oct-2-ulosonate + CTP = CMP-3-deoxy-beta-D-manno-octulosonate + diphosphate. It functions in the pathway nucleotide-sugar biosynthesis; CMP-3-deoxy-D-manno-octulosonate biosynthesis; CMP-3-deoxy-D-manno-octulosonate from 3-deoxy-D-manno-octulosonate and CTP: step 1/1. The protein operates within bacterial outer membrane biogenesis; lipopolysaccharide biosynthesis. Its function is as follows. Activates KDO (a required 8-carbon sugar) for incorporation into bacterial lipopolysaccharide in Gram-negative bacteria. The sequence is that of 3-deoxy-manno-octulosonate cytidylyltransferase from Methylibium petroleiphilum (strain ATCC BAA-1232 / LMG 22953 / PM1).